A 131-amino-acid chain; its full sequence is Modulator protein MzrA (131 aa).

At 1–14 the chain is on the cytoplasmic side; sequence MSIRWLFPKLTPRK. The helical transmembrane segment at 15–31 threads the bilayer; the sequence is VARILILLALPIIALTQ. Topologically, residues 32–131 are periplasmic; it reads SQSLRHSQDD…KLTQKQSKLG (100 aa).

It belongs to the MzrA family. As to quaternary structure, interacts with EnvZ.

The protein resides in the cell inner membrane. Modulates the activity of the EnvZ/OmpR two-component regulatory system, probably by directly modulating EnvZ enzymatic activity and increasing stability of phosphorylated OmpR. The polypeptide is Modulator protein MzrA (Pectobacterium carotovorum subsp. carotovorum (strain PC1)).